Consider the following 58-residue polypeptide: Large ribosomal subunit protein uL30 (58 aa).

It belongs to the universal ribosomal protein uL30 family. Part of the 50S ribosomal subunit.

The chain is Large ribosomal subunit protein uL30 from Trichlorobacter lovleyi (strain ATCC BAA-1151 / DSM 17278 / SZ) (Geobacter lovleyi).